The chain runs to 582 residues: Membrane protein insertase YidC (582 aa).

Residues 3 to 23 (IQRALVITGIAVVSYLMIQAW) form a helical membrane-spanning segment. Residues 38–92 (QVAEQGNSSSSDSADLPSVQSQTDNSIPSAQSDNDLPSVSPADIAQPTPSSQRIE) are disordered. Over residues 45 to 58 (SSSSDSADLPSVQS) the composition is skewed to low complexity. The segment covering 59–74 (QTDNSIPSAQSDNDLP) has biased composition (polar residues). 5 helical membrane-spanning segments follow: residues 357–377 (TVDY…LVFL), 394–414 (GVGN…AIFF), 464–484 (LGGC…YYVL), 495–515 (FFLW…PILM), and 541–561 (MPMI…LYWL).

Belongs to the OXA1/ALB3/YidC family. Type 1 subfamily. Interacts with the Sec translocase complex via SecD. Specifically interacts with transmembrane segments of nascent integral membrane proteins during membrane integration.

It localises to the cell inner membrane. Its function is as follows. Required for the insertion and/or proper folding and/or complex formation of integral membrane proteins into the membrane. Involved in integration of membrane proteins that insert both dependently and independently of the Sec translocase complex, as well as at least some lipoproteins. Aids folding of multispanning membrane proteins. This chain is Membrane protein insertase YidC, found in Alcanivorax borkumensis (strain ATCC 700651 / DSM 11573 / NCIMB 13689 / SK2).